The primary structure comprises 250 residues: Recombination protein RecR (250 aa).

The C4-type zinc-finger motif lies at 56-71 (CRICHNISQEDVCRIC). The 149-residue stretch at 79 to 227 (SIICVVEESK…TVTRLASGIP (149 aa)) folds into the Toprim domain. The disordered stretch occupies residues 148 to 172 (LGDADTPADGESSGADAAETGNAKT).

It belongs to the RecR family.

Its function is as follows. May play a role in DNA repair. It seems to be involved in an RecBC-independent recombinational process of DNA repair. It may act with RecF and RecO. This chain is Recombination protein RecR, found in Corynebacterium jeikeium (strain K411).